The chain runs to 273 residues: MHVPGTRAKMSSIFAYQSSEVDWCESNFQHSELVAEFYNTFSNVFFLIFGPLMMFLMHPYAQKRTRCFYGVSVLFMLIGLFSMYFHMTLSFLGQLLDEISILWLLASGYSVWLPRCYFPKFVKGNRFYFSCLVTITTIISTFLTFVKPTVNAYALNSIAIHILYIVRTEYKKIRDDDLRHLIAVSVVLWAAALTSWISDRVLCSFWQRIHFYYLHSIWHVLISITFPYGIVTMALVDAKYEMPDKTLKVHYWPRDSWVIGLPYVEIQENDKNC.

The Lumenal segment spans residues M1 to E36. Ca(2+) contacts are provided by D22, W23, E25, N27, and E36. The chain crosses the membrane as a helical span at residues F37 to M57. Residues H58–S72 are Cytoplasmic-facing. The next 2 membrane-spanning stretches (helical) occupy residues V73–G93 and Q94–P114. H86 serves as a coordination point for Zn(2+). Residues R115–R126 lie on the Cytoplasmic side of the membrane. The helical transmembrane segment at F127–K147 threads the bilayer. At P148–T149 the chain is on the lumenal side. The helical transmembrane segment at V150–R167 threads the bilayer. The Cytoplasmic portion of the chain corresponds to T168–D177. Residues L178–S198 form a helical membrane-spanning segment. Residues D199–H215 lie on the Lumenal side of the membrane. Zn(2+) contacts are provided by H215 and H219. A helical membrane pass occupies residues S216–V236. At D237–C273 the chain is on the cytoplasmic side.

This sequence belongs to the alkaline ceramidase family. Requires Zn(2+) as cofactor. In terms of tissue distribution, highly expressed in skin. Weakly or not expressed in other tissues. Expressed by granular layer of interfollicular epidermis, sebaceous glands and infundibulum.

It localises to the endoplasmic reticulum membrane. It carries out the reaction an N-acylsphing-4-enine + H2O = sphing-4-enine + a fatty acid. The catalysed reaction is N-tetracosanoyl-sphing-4-enine + H2O = tetracosanoate + sphing-4-enine. It catalyses the reaction an N-acylsphinganine + H2O = sphinganine + a fatty acid. The enzyme catalyses N-(9Z-octadecenoyl)-sphing-4-enine + H2O = sphing-4-enine + (9Z)-octadecenoate. It carries out the reaction N-(15Z-tetracosenoyl)-sphing-4-enine + H2O = (15Z)-tetracosenoate + sphing-4-enine. It functions in the pathway lipid metabolism; sphingolipid metabolism. Inhibited by sphingosine. Inhibited by Mn(2+), Zn(2+), and Cu(2+) in a dose-dependent manner. Slightly activated by Ca(2+) in a dose-dependent manner. Endoplasmic reticulum ceramidase that catalyzes the hydrolysis of ceramides into sphingosine and free fatty acids at alkaline pH. Ceramides, sphingosine, and its phosphorylated form sphingosine-1-phosphate are bioactive lipids that mediate cellular signaling pathways regulating several biological processes including cell proliferation, apoptosis and differentiation. Exhibits a strong substrate specificity towards the natural stereoisomer of ceramides with D-erythro-sphingosine as a backbone and has a higher activity towards very long-chain unsaturated fatty acids like the C24:1-ceramide. May also hydrolyze dihydroceramides to produce dihydrosphingosine. ACER1 is a skin-specific ceramidase that regulates the levels of ceramides, sphingosine and sphingosine-1-phosphate in the epidermis, mediates the calcium-induced differentiation of epidermal keratinocytes and more generally plays an important role in skin homeostasis. This chain is Alkaline ceramidase 1, found in Mus musculus (Mouse).